Consider the following 2039-residue polypeptide: Methylcytosine dioxygenase TET1 (2039 aa).

The span at 1 to 19 shows a compositional bias: basic residues; it reads MSRSRPAKPSKSVKTKLQK. Disordered stretches follow at residues 1–79, 119–168, and 227–286; these read MSRS…AGAA, VVTP…NGEQ, and DNEC…GFPD. Basic and acidic residues-rich tracts occupy residues 53-65 and 138-149; these read KRRD…EDKT and IQDEPGVKHSEN. 2 stretches are compositionally biased toward polar residues: residues 150–168 and 241–265; these read DSVP…NGEQ and QRST…SQVE. Residues 512–657 are sufficient for binding to genomic CpG islands; that stretch reads LDLTQGSQAA…NGPKSESMDC (146 aa). The segment at 567-608 adopts a CXXC-type zinc-finger fold; sequence ERRKRKACGVCEPCQQKANCGECTYCKNRKNSHQICKKRKCE. The Zn(2+) site is built by C574, C577, C580, C586, C589, C592, C602, and C607. Disordered stretches follow at residues 613–670, 711–735, 820–859, 882–906, 964–993, 1050–1129, 1209–1240, and 1322–1341; these read KPEA…QRLD, CDAN…NPSP, GAEP…VQPS, QLSE…HQKT, QGYP…SHPL, VRNA…KKQE, VEPS…QGQP, and KREA…DSAQ. Positions 653-670 are enriched in basic and acidic residues; sequence ESMDCSRRGHGEEEQRLD. Over residues 825–835 the composition is skewed to polar residues; sequence IFNNHPNTHSA. Residues 840–852 are compositionally biased toward basic and acidic residues; sequence HPPEKVPNKEPKD. The residue at position 854 (S854) is a Phosphoserine. The segment covering 884–894 has biased composition (low complexity); sequence SEAPSESSSPS. The span at 895–904 shows a compositional bias: basic and acidic residues; it reads KPEKDEEAHQ. Polar residues predominate over residues 1053–1064; the sequence is AESTPESLVAKN. The span at 1094–1116 shows a compositional bias: basic residues; it reads KPKKAQKKARATPHANKRKKKPP. Composition is skewed to polar residues over residues 1214 to 1227 and 1326 to 1341; these read SLPT…SGGQ and QTSS…DSAQ. Residues C1371, C1373, C1430, H1456, and C1458 each coordinate Zn(2+). A 2-oxoglutarate-binding site is contributed by R1499. Zn(2+) contacts are provided by C1509, C1511, C1527, and C1536. An interaction with DNA region spans residues 1528-1541; that stretch reads SWSMYFNGCKFGRS. Residue K1537 forms a Glycyl lysine isopeptide (Lys-Gly) (interchain with G-Cter in ubiquitin) linkage. C1628 lines the Zn(2+) pocket. Residue C1644 coordinates 2-oxoglutarate. H1650 is a Zn(2+) binding site. The Fe cation site is built by H1652 and D1654. N1657 lines the substrate pocket. H1685 contributes to the 2-oxoglutarate binding site. The span at 1734–1743 shows a compositional bias: basic residues; sequence GKRAKMKQNH. 2 disordered regions span residues 1734 to 1760 and 1830 to 1901; these read GKRA…ASST and AAHP…LPQL. The segment covering 1748 to 1760 has biased composition (low complexity); it reads SHNTKSFSSASST. The span at 1850–1875 shows a compositional bias: polar residues; that stretch reads TSPSEQLTSNQSNQQLPLLSNSQKLA. Over residues 1880-1895 the composition is skewed to basic and acidic residues; the sequence is EDERHPEADEPQHPED. Residue H1939 participates in Fe cation binding. 1954–1956 contacts 2-oxoglutarate; that stretch reads RVS. Residue 1960–1962 participates in substrate binding; sequence YQH. H1970 contacts Zn(2+).

It belongs to the TET family. Interacts with SIN3A; recruits the transcriptional co-repressor SIN3A to gene promoters. Interacts with HCFC1. Interacts (via C-terminus) with OGT. Found in a complex composed of at least SINHCAF, SIN3A, HDAC1, SAP30, RBBP4, OGT and TET1. Interacts with QSER1. Interacts with NONO (via DNA-binding domain); this interaction recruits TET1 to genomic loci. Interacts with FOXA2; this interaction may recruit TET1 to specific enhancers to preserve their unmethylated status and hence allowing gene expression. Interacts with RNF2. Directly interacts (via C-terminus) with the DCAF1 component of the CRL4(VprBP) E3 ubiquitin-protein ligase complex. In terms of assembly, interacts with UHRF1; this interaction induces the recruitment of TET1 to replicating heterochromatin. Interacts with DCAF1. Fe(2+) is required as a cofactor. Zn(2+) serves as cofactor. Glycosylated. Interaction with OGT leads to GlcNAcylation. In terms of processing, monoubiquitinated by the DCX (DDB1-CUL4-X-box) E3 ubiquitin-protein ligase complex called CRL4(VprBP) or CUL4A-RBX1-DDB1-DCAF1/VPRBP complex. Post-translationally, monoubiquitinated by the DCX (DDB1-CUL4-X-box) E3 ubiquitin-protein ligase complex called CRL4(VprBP) or CUL4A-RBX1-DDB1-DCAF1/VPRBP complex; this modification promotes binding to DNA. Expressed in germinal vesicle (GV) stage and MII-stage oocytes and in early embryos. Also detected somatic tissues, including brain, liver and kidney, but at very low levels. As to expression, predominantly expressed in early embryos. Also expressed in embryonic stem cells and in primordial germ cells. Expressed in adult tissues, including brain cortex, cerebellum, heart, kidney, liver, muscle and spleen, although at much lower levels than isoform 2. In the brain, expressed at higher levels in glial cells than in neurons. Expressed in placenta. Expressed in the pituitary, most probably in thyrotropes. In terms of tissue distribution, preferentially expressed in differentiated cells, including in cerebral cortex, cerebellum and thymus. Also expressed in heart, kidney, liver, muscle and spleen at much higher levels than isoform 1. In the brain, expressed at higher levels in neurons than in glial cells. Expressed in the olfactory bulb and in the mammary gland.

The protein resides in the nucleus. The protein localises to the chromosome. The enzyme catalyses a 5-methyl-2'-deoxycytidine in DNA + 2-oxoglutarate + O2 = a 5-hydroxymethyl-2'-deoxycytidine in DNA + succinate + CO2. It catalyses the reaction a 5-hydroxymethyl-2'-deoxycytidine in DNA + 2-oxoglutarate + O2 = a 5-formyl-2'-deoxycytidine in DNA + succinate + CO2 + H2O. The catalysed reaction is a 5-formyl-2'-deoxycytidine in DNA + 2-oxoglutarate + O2 = a 5-carboxyl-2'-deoxycytidine in DNA + succinate + CO2 + H(+). Dioxygenase that plays a key role in active DNA demethylation, by catalyzing the sequential oxidation of the modified genomic base 5-methylcytosine (5mC) into 5-hydroxymethylcytosine (5hmC), 5-formylcytosine (5fC), and 5-carboxylcytosine (5caC). In addition to its role in DNA demethylation, plays a more general role in chromatin regulation by recruiting histone modifying protein complexes to alter histone marks and chromatin accessibility, leading to both activation and repression of gene expression. Plays therefore a role in many biological processes, including stem cell maintenance, T- and B-cell development, inflammation regulation, iron homeostasis, neural activity or DNA repair. Involved in the balance between pluripotency and lineage commitment of cells it plays a role in embryonic stem cells maintenance and inner cell mass cell specification. Together with QSER1, plays an essential role in the protection and maintenance of transcriptional and developmental programs to inhibit the binding of DNMT3A/3B and therefore de novo methylation. May play a role in the pancreatic beta-cell specification during development. In this context, may function as an upstream epigenetic regulator of PAX4 presumably through direct recruitment by FOXA2 to a PAX4 enhancer to preserve its unmethylated status, thereby potentiating PAX4 expression to adopt beta-cell fate during endocrine lineage commitment. Under DNA hypomethylation conditions, such as in female meiotic germ cells, may induce epigenetic reprogramming of pericentromeric heterochromatin (PCH), the constitutive heterochromatin of pericentromeric regions. PCH forms chromocenters in the interphase nucleus and chromocenters cluster at the prophase of meiosis. In this context, may also be essential for chromocenter clustering in a catalytic activity-independent manner, possibly through the recruitment polycomb repressive complex 1 (PRC1) to the chromocenters. During embryonic development, may be required for normal meiotic progression in oocytes and meiotic gene activation. Binds preferentially to DNA containing cytidine-phosphate-guanosine (CpG) dinucleotides over CpH (H=A, T, and C), hemimethylated-CpG and hemimethylated-hydroxymethyl-CpG. Functionally, dioxygenase that plays a key role in active DNA demethylation. Binds to promoters, particularly to those with high CG content. In hippocampal neurons, isoform 1 regulates the expression of a unique subset of genes compared to isoform 2, although some overlap between both isoforms, hence differentially regulates excitatory synaptic transmission. In hippocampal neuron cell cultures, isoform 1 controls both miniature excitatory postsynaptic current amplitude and frequency. Isoform 1 may regulate genes involved in hippocampal-dependent memory, leading to positive regulation of memory, contrary to isoform 2 that may decrease memory. In terms of biological role, dioxygenase that plays a key role in active DNA demethylation. As isoform 1, binds to promoters, particularly to those with high CG content, however displays reduced global chromatin affinity compared with isoform 1, leading to decreased global DNA demethylation compared with isoform 1. Contrary to isoform 1, isoform 2 localizes during S phase to sites of ongoing DNA replication in heterochromatin, causing a significant de novo 5hmC formation, globally, and more so in heterochromatin, including LINE 1 interspersed DNA repeats leading to their activation. In hippocampal neurons, isoform 2 regulates the expression of a unique subset of genes compared with isoform 1, although some overlap between both isoforms, hence differentially regulating excitatory synaptic transmission. In hippocampal neuron cell cultures, isoform 2 controls miniature excitatory postsynaptic current frequency, but not amplitude. Isoform 2 may regulate genes involved in hippocampal-dependent memory, leading to negative regulation of memory, contrary to isoform 1 that may improve memory. In immature and partially differentiated gonadotrope cells, represses luteinizing hormone gene LHB expression directly and does not catalyze 5hmC at the gene promoter. In Mus musculus (Mouse), this protein is Methylcytosine dioxygenase TET1 (Tet1).